We begin with the raw amino-acid sequence, 123 residues long: UPF0102 protein Csal_2201 (123 aa).

The protein belongs to the UPF0102 family.

This is UPF0102 protein Csal_2201 from Chromohalobacter salexigens (strain ATCC BAA-138 / DSM 3043 / CIP 106854 / NCIMB 13768 / 1H11).